The chain runs to 177 residues: SPbeta prophage-derived uncharacterized N-acetyltransferase YokL (177 aa).

The region spanning 11–170 (LTLRAIQPED…DGICFGMTRE (160 aa)) is the N-acetyltransferase domain.

It belongs to the acetyltransferase family.

This is SPbeta prophage-derived uncharacterized N-acetyltransferase YokL (yokL) from Bacillus subtilis (strain 168).